The sequence spans 2710 residues: Serine/threonine-protein kinase ATR (2710 aa).

In terms of domain architecture, FAT spans 1647-2257 (TLAKASFRCQ…LWMMAAVSKS (611 aa)). One can recognise a PI3K/PI4K catalytic domain in the interval 2368–2680 (IADDAEILNS…GVNAAPSLPL (313 aa)). Positions 2374-2380 (ILNSLQK) are G-loop. The interval 2545–2553 (GLGDRHGEN) is catalytic loop. Residues 2565–2589 (HVDFSCLFDKGLLLEKPEVVPFRFT) form an activation loop region. One can recognise an FATC domain in the interval 2678–2710 (LPLSVEGQARRLIAEAVSHSNLGKMYVWWMAWF).

Belongs to the PI3/PI4-kinase family. ATM subfamily.

It localises to the nucleus. The enzyme catalyses L-seryl-[protein] + ATP = O-phospho-L-seryl-[protein] + ADP + H(+). The catalysed reaction is L-threonyl-[protein] + ATP = O-phospho-L-threonyl-[protein] + ADP + H(+). Functionally, probable serine/threonine kinase. Seems to play a central role in cell-cycle regulation by transmitting DNA damage signals to downstream effectors of cell-cycle progression. May recognize the substrate consensus sequence [ST]-Q and phosphorylate histone variant H2AX to form H2AXS139ph at sites of DNA damage, thereby regulating DNA damage response mechanism. This Oryza sativa subsp. japonica (Rice) protein is Serine/threonine-protein kinase ATR.